Here is a 478-residue protein sequence, read N- to C-terminus: Cysteine--tRNA ligase (478 aa).

Cysteine 37 is a binding site for Zn(2+). The 'HIGH' region signature appears at 39-49 (PTVYHYAHIGN). The Zn(2+) site is built by cysteine 224, histidine 249, and glutamate 253. Residues 281–285 (KMSKS) carry the 'KMSKS' region motif. An ATP-binding site is contributed by lysine 284.

Belongs to the class-I aminoacyl-tRNA synthetase family. As to quaternary structure, monomer. Zn(2+) serves as cofactor.

Its subcellular location is the cytoplasm. It carries out the reaction tRNA(Cys) + L-cysteine + ATP = L-cysteinyl-tRNA(Cys) + AMP + diphosphate. In Protochlamydia amoebophila (strain UWE25), this protein is Cysteine--tRNA ligase.